The following is a 262-amino-acid chain: G patch domain-containing protein 11 (262 aa).

Composition is skewed to basic and acidic residues over residues 39 to 61 (LHKE…ESRE), 114 to 127 (EEVK…ELQN), and 136 to 165 (QHLE…DLRK). Disordered stretches follow at residues 39–71 (LHKE…IGSQ) and 88–169 (GLGK…SQRA). Residues 41-62 (KEKDIQNRQKSFKEQEKESREA) are a coiled coil. Positions 70–116 (SQNKGFALLQKMGYKAGQGLGKEGAGRVEPVPLNIKTDRGGIGMEEV) constitute a G-patch domain.

It belongs to the GPATCH11 family.

The protein localises to the chromosome. Its subcellular location is the centromere. It localises to the kinetochore. This chain is G patch domain-containing protein 11 (gpatch11), found in Danio rerio (Zebrafish).